The chain runs to 276 residues: Casein kinase II subunit beta-3 (276 aa).

2 disordered regions span residues 1-22 and 34-86; these read MYKE…LGGA and KKLE…SEGD.

It belongs to the casein kinase 2 subunit beta family. Heterotetramer of two catalytic alpha subunits and two regulatory beta subunits. Interacts with CCA1. Interacts with LHY. Post-translationally, phosphorylated by alpha subunit.

The protein resides in the cytoplasm. The protein localises to the cytosol. It localises to the nucleus. Its function is as follows. Plays a complex role in regulating the basal catalytic activity of the alpha subunit. The tetrameric holoenzyme CK2, composed of two alpha and two beta subunits, phosphorylates the transcription factor PIF1 after an exposure to light, resulting in a proteasome-dependent degradation of PIF1 and promotion of photomorphogenesis. CK2 phosphorylates translation initiation factors. May participate in the regulation of the initiation of translation. Stimulates the binding of CCA1 to promoters. This chain is Casein kinase II subunit beta-3 (CKB3), found in Arabidopsis thaliana (Mouse-ear cress).